The primary structure comprises 245 residues: MRHDGRQHDELRPITFDLDFITHPEGSVLITAGNTKVICNASVEDRVPPFLRGGGKGWITAEYSMLPRATNQRTIRESSKGKVSGRTMEIQRLIGRALRAVVDLEKLGERTIWIDCDVIQADGGTRTASITGAFLAMAIAIGKLVKSGVIKTSPVTDYLAAISVGMDKEEGLLLDLNYEEDSAAEVDMNIIMTGSGRFVELQGTGEEATFSREDLNGLLSLAEKGIQTLIQKQKEVLGETLPELK.

Residues Arg-86 and 124–126 contribute to the phosphate site; that span reads GTR.

It belongs to the RNase PH family. As to quaternary structure, homohexameric ring arranged as a trimer of dimers.

The enzyme catalyses tRNA(n+1) + phosphate = tRNA(n) + a ribonucleoside 5'-diphosphate. Its function is as follows. Phosphorolytic 3'-5' exoribonuclease that plays an important role in tRNA 3'-end maturation. Removes nucleotide residues following the 3'-CCA terminus of tRNAs; can also add nucleotides to the ends of RNA molecules by using nucleoside diphosphates as substrates, but this may not be physiologically important. Probably plays a role in initiation of 16S rRNA degradation (leading to ribosome degradation) during starvation. The polypeptide is Ribonuclease PH (Bacillus velezensis (strain DSM 23117 / BGSC 10A6 / LMG 26770 / FZB42) (Bacillus amyloliquefaciens subsp. plantarum)).